We begin with the raw amino-acid sequence, 1068 residues long: Probable ATPase FE772_23070 (1068 aa).

217-224 (GGGGAGKT) provides a ligand contact to ATP.

Involved in defense against bacteriophages. When this probable 4 gene operon (bGSDM-FE772_23060-FE772_23065-FE772_23070) is inserted into E.coli it provides nearly 100-fold protection against phages T5 and T6 and about 8-fold against phage T4. The operon without bGSDM no longer protects against phage. Probably a nucleotide hydrolase, possibly of ATP. The polypeptide is Probable ATPase FE772_23070 (Lysobacter enzymogenes).